The following is a 214-amino-acid chain: Attacin (214 aa).

The N-terminal stretch at 1 to 19 is a signal peptide; that stretch reads MSKSVALLLLCACLASGRH. Residues 20–26 constitute a propeptide that is removed on maturation; that stretch reads VPTRARR.

Belongs to the attacin/sarcotoxin-2 family. In terms of tissue distribution, highest expression in fat body and hemocytes and to a much lesser extent in Malpighian tubules, silk gland and midgut.

The protein localises to the secreted. In terms of biological role, hemolymph antibacterial protein. Has a wide spectrum of activity against both Gram-positive and Gram-negative bacteria. The sequence is that of Attacin from Bombyx mori (Silk moth).